The chain runs to 511 residues: Maturase K (511 aa).

The protein belongs to the intron maturase 2 family. MatK subfamily.

Its subcellular location is the plastid. It localises to the chloroplast. In terms of biological role, usually encoded in the trnK tRNA gene intron. Probably assists in splicing its own and other chloroplast group II introns. This Phleum pratense (Common timothy) protein is Maturase K.